The following is a 570-amino-acid chain: Urease subunit alpha (570 aa).

The region spanning 133–570 is the Urease domain; sequence GGIDNHIHYI…LPLAQLYNLF (438 aa). Ni(2+) contacts are provided by histidine 138, histidine 140, and lysine 221. Position 221 is an N6-carboxylysine (lysine 221). Histidine 223 lines the substrate pocket. 2 residues coordinate Ni(2+): histidine 250 and histidine 276. The active-site Proton donor is histidine 324. Ni(2+) is bound at residue aspartate 364.

This sequence belongs to the metallo-dependent hydrolases superfamily. Urease alpha subunit family. In terms of assembly, heterotrimer of UreA (gamma), UreB (beta) and UreC (alpha) subunits. Three heterotrimers associate to form the active enzyme. Ni cation serves as cofactor. In terms of processing, carboxylation allows a single lysine to coordinate two nickel ions.

It is found in the cytoplasm. The catalysed reaction is urea + 2 H2O + H(+) = hydrogencarbonate + 2 NH4(+). The protein operates within nitrogen metabolism; urea degradation; CO(2) and NH(3) from urea (urease route): step 1/1. This chain is Urease subunit alpha, found in Cytophaga hutchinsonii (strain ATCC 33406 / DSM 1761 / CIP 103989 / NBRC 15051 / NCIMB 9469 / D465).